A 336-amino-acid chain; its full sequence is Ribosomal RNA large subunit methyltransferase F (336 aa).

It belongs to the methyltransferase superfamily. METTL16/RlmF family.

Its subcellular location is the cytoplasm. It catalyses the reaction adenosine(1618) in 23S rRNA + S-adenosyl-L-methionine = N(6)-methyladenosine(1618) in 23S rRNA + S-adenosyl-L-homocysteine + H(+). Its function is as follows. Specifically methylates the adenine in position 1618 of 23S rRNA. In Serratia proteamaculans (strain 568), this protein is Ribosomal RNA large subunit methyltransferase F.